The following is a 169-amino-acid chain: Shikimate kinase (169 aa).

12-17 lines the ATP pocket; it reads AVGKTT. Thr-16 lines the Mg(2+) pocket. The substrate site is built by Asp-34, Arg-58, and Gly-80. Arg-119 is a binding site for ATP. Arg-139 contributes to the substrate binding site. Arg-156 contributes to the ATP binding site.

This sequence belongs to the shikimate kinase family. As to quaternary structure, monomer. Requires Mg(2+) as cofactor.

The protein resides in the cytoplasm. It carries out the reaction shikimate + ATP = 3-phosphoshikimate + ADP + H(+). It functions in the pathway metabolic intermediate biosynthesis; chorismate biosynthesis; chorismate from D-erythrose 4-phosphate and phosphoenolpyruvate: step 5/7. Catalyzes the specific phosphorylation of the 3-hydroxyl group of shikimic acid using ATP as a cosubstrate. The sequence is that of Shikimate kinase from Alkaliphilus oremlandii (strain OhILAs) (Clostridium oremlandii (strain OhILAs)).